The chain runs to 338 residues: Replication factor C subunit 3 (338 aa).

57–64 serves as a coordination point for ATP; that stretch reads GPPGTGKT.

Belongs to the activator 1 small subunits family. In terms of assembly, heteropentamer of subunits RFC1, RFC2, RFC3, RFC4 and RFC5 that forms a complex with PCNA in the presence of ATP.

It localises to the nucleus. In terms of biological role, the elongation of primed DNA templates by DNA polymerase delta and epsilon requires the action of the accessory proteins proliferating cell nuclear antigen (PCNA) and activator 1. Subunit 3 binds ATP. In Blastobotrys adeninivorans (Yeast), this protein is Replication factor C subunit 3 (RFC3).